The primary structure comprises 915 residues: Alanine--tRNA ligase (915 aa).

Zn(2+) is bound by residues His-609, His-613, Cys-712, and His-716.

The protein belongs to the class-II aminoacyl-tRNA synthetase family. It depends on Zn(2+) as a cofactor.

Its subcellular location is the cytoplasm. It carries out the reaction tRNA(Ala) + L-alanine + ATP = L-alanyl-tRNA(Ala) + AMP + diphosphate. Functionally, catalyzes the attachment of alanine to tRNA(Ala) in a two-step reaction: alanine is first activated by ATP to form Ala-AMP and then transferred to the acceptor end of tRNA(Ala). Also edits incorrectly charged Ser-tRNA(Ala) and Gly-tRNA(Ala) via its editing domain. This chain is Alanine--tRNA ligase, found in Methanoculleus marisnigri (strain ATCC 35101 / DSM 1498 / JR1).